The primary structure comprises 868 residues: DNA topoisomerase 1 (868 aa).

Residues K3–I148 enclose the Toprim domain. E9 and D117 together coordinate Mg(2+). The region spanning N164–L581 is the Topo IA-type catalytic domain. An interaction with DNA region spans residues S198–Q203. Y325 serves as the catalytic O-(5'-phospho-DNA)-tyrosine intermediate. 3 consecutive C4-type zinc fingers follow at residues C605–C636, C667–C694, and C716–C739.

This sequence belongs to the type IA topoisomerase family. In terms of assembly, monomer. Mg(2+) is required as a cofactor.

The catalysed reaction is ATP-independent breakage of single-stranded DNA, followed by passage and rejoining.. Releases the supercoiling and torsional tension of DNA, which is introduced during the DNA replication and transcription, by transiently cleaving and rejoining one strand of the DNA duplex. Introduces a single-strand break via transesterification at a target site in duplex DNA. The scissile phosphodiester is attacked by the catalytic tyrosine of the enzyme, resulting in the formation of a DNA-(5'-phosphotyrosyl)-enzyme intermediate and the expulsion of a 3'-OH DNA strand. The free DNA strand then undergoes passage around the unbroken strand, thus removing DNA supercoils. Finally, in the religation step, the DNA 3'-OH attacks the covalent intermediate to expel the active-site tyrosine and restore the DNA phosphodiester backbone. This is DNA topoisomerase 1 from Pasteurella multocida (strain Pm70).